Here is a 409-residue protein sequence, read N- to C-terminus: NADH-quinone oxidoreductase subunit D (409 aa).

This sequence belongs to the complex I 49 kDa subunit family. NDH-1 is composed of 14 different subunits. Subunits NuoB, C, D, E, F, and G constitute the peripheral sector of the complex.

The protein localises to the cell inner membrane. It carries out the reaction a quinone + NADH + 5 H(+)(in) = a quinol + NAD(+) + 4 H(+)(out). NDH-1 shuttles electrons from NADH, via FMN and iron-sulfur (Fe-S) centers, to quinones in the respiratory chain. The immediate electron acceptor for the enzyme in this species is believed to be ubiquinone. Couples the redox reaction to proton translocation (for every two electrons transferred, four hydrogen ions are translocated across the cytoplasmic membrane), and thus conserves the redox energy in a proton gradient. This is NADH-quinone oxidoreductase subunit D from Helicobacter acinonychis (strain Sheeba).